The primary structure comprises 190 residues: Jupiter microtubule associated homolog 2 (190 aa).

Met1 is modified (N-acetylmethionine). Residues 1-15 (MFQGADSQAGKSGSR) show a composition bias toward polar residues. Positions 1–190 (MFQGADSQAG…PGGKSSLSFY (190 aa)) are disordered. An N6-acetyllysine modification is found at Lys11. Ser30 carries the post-translational modification Phosphoserine. Polar residues predominate over residues 35–44 (ISSSKPNRMA). A phosphoserine mark is found at Ser45, Ser69, and Ser97. Basic and acidic residues-rich tracts occupy residues 110–129 (KPKD…DLKA) and 138–153 (EQSD…HAKI). The residue at position 144 (Ser144) is a Phosphoserine.

Belongs to the JUPITER family. Monomer. Dimer. Interacts with TPCN1.

Its subcellular location is the cytoplasm. The protein resides in the nucleus. In terms of biological role, nicotinic acid adenine dinucleotide phosphate (NAADP) binding protein required for NAADP-evoked intracellular calcium release. Confers NAADP-sensitivity to the two pore channels (TPCs) complex. Enables NAADP to activate Ca(2+) release from the endoplasmic reticulum through ryanodine receptors. The protein is Jupiter microtubule associated homolog 2 of Mus musculus (Mouse).